A 400-amino-acid polypeptide reads, in one-letter code: Snake venom metalloproteinase H1 (400 aa).

An N-terminal signal peptide occupies residues 1–6; it reads FPYQGS. Positions 7-176 are excised as a propeptide; sequence SIILESGNVN…KKASQLIVST (170 aa). The region spanning 180–377 is the Peptidase M12B domain; that stretch reads RYMEIVIVVD…ENPPCILNKP (198 aa). Positions 183 and 267 each coordinate Ca(2+). 3 cysteine pairs are disulfide-bonded: Cys-291–Cys-372, Cys-331–Cys-356, and Cys-333–Cys-339. His-316 provides a ligand contact to Zn(2+). Glu-317 is a catalytic residue. His-320 and His-326 together coordinate Zn(2+). 7 residues coordinate Ca(2+): Cys-372, Asn-375, Val-387, Asn-390, Leu-392, Glu-394, and Asp-400. Residues 378–400 constitute a propeptide that is removed on maturation; the sequence is LRTDTVSTPVSGNELLEAGKDYD.

This sequence belongs to the venom metalloproteinase (M12B) family. P-I subfamily. Monomer. It depends on Zn(2+) as a cofactor. As to expression, expressed by the venom gland.

Its subcellular location is the secreted. Snake venom metalloproteinase that impairs hemostasis in the envenomed animal. This Deinagkistrodon acutus (Hundred-pace snake) protein is Snake venom metalloproteinase H1.